Consider the following 159-residue polypeptide: Nucleotide-binding protein Avin_13410 (159 aa).

It belongs to the YajQ family.

Functionally, nucleotide-binding protein. This chain is Nucleotide-binding protein Avin_13410, found in Azotobacter vinelandii (strain DJ / ATCC BAA-1303).